The following is a 240-amino-acid chain: Competence protein ComFC (240 aa).

The protein belongs to the ComF/GntX family. Monomer and dimer in solution. Interacts with ComFA and DprA; ComFA-ComFC form rings about 150 Angstroms in diameter with apparent 6-fold symmetry.

Functionally, involved in transformation (genetic competence for DNA uptake). The chain is Competence protein ComFC (comFC) from Bacillus subtilis (strain 168).